The chain runs to 308 residues: Transaldolase (308 aa).

Residue Lys-125 is the Schiff-base intermediate with substrate of the active site.

This sequence belongs to the transaldolase family. Type 1 subfamily. Homodimer.

Its subcellular location is the cytoplasm. It carries out the reaction D-sedoheptulose 7-phosphate + D-glyceraldehyde 3-phosphate = D-erythrose 4-phosphate + beta-D-fructose 6-phosphate. It participates in carbohydrate degradation; pentose phosphate pathway; D-glyceraldehyde 3-phosphate and beta-D-fructose 6-phosphate from D-ribose 5-phosphate and D-xylulose 5-phosphate (non-oxidative stage): step 2/3. Transaldolase is important for the balance of metabolites in the pentose-phosphate pathway. This is Transaldolase from Pseudomonas entomophila (strain L48).